The chain runs to 567 residues: Urease subunit alpha (567 aa).

One can recognise a Urease domain in the interval 128-567 (GGIDAHVHFI…LPMSQRYFLF (440 aa)). Ni(2+) contacts are provided by H133, H135, and K216. K216 carries the N6-carboxylysine modification. H218 contributes to the substrate binding site. The Ni(2+) site is built by H245 and H271. The active-site Proton donor is the H319. D359 serves as a coordination point for Ni(2+).

Belongs to the metallo-dependent hydrolases superfamily. Urease alpha subunit family. As to quaternary structure, heterotrimer of UreA (gamma), UreB (beta) and UreC (alpha) subunits. Three heterotrimers associate to form the active enzyme. Ni cation serves as cofactor. Carboxylation allows a single lysine to coordinate two nickel ions.

It localises to the cytoplasm. The enzyme catalyses urea + 2 H2O + H(+) = hydrogencarbonate + 2 NH4(+). Its pathway is nitrogen metabolism; urea degradation; CO(2) and NH(3) from urea (urease route): step 1/1. The sequence is that of Urease subunit alpha from Blochmanniella pennsylvanica (strain BPEN).